The chain runs to 393 residues: MVKVNGFSFVARSAGIRKSGKPDLGLIFSTVPARCAGVFTTNKVQAAPVLVTAPRIAAGECQAVLVNSGNANACTGEVGMQDALRCGQLAAKSLGIDEQLVAVSSTGVIGHPLPMPLLEKTIPGMSEGLSETAVDDVANAMMTTDSFAKVASRQAGDSAPYTILGVAKGAGMIHPNMATMLSFVMTDACVDQHFLQQALRQAVEGSFNIITVDRDTSTNDMVLVLANGESKTPEIVADSAEGQEFAELLRGVLLDLAKMIVRDGEGATKLVHVCVNGAADDGDARKVAYNVATSNLVKTAFFGEDANWGRIIAAVGYSEAQVDPSRIAIFFDGVPVVQKGLGTGPELEAQATDVLKQAEFSVTIDLGLGDGRGEYYTSDLTYEYVKINADYRT.

Residues threonine 143, lysine 168, threonine 179, glutamate 265, asparagine 388, and threonine 393 each contribute to the substrate site. Threonine 179 serves as the catalytic Nucleophile.

Belongs to the ArgJ family. As to quaternary structure, heterotetramer of two alpha and two beta chains.

The protein resides in the cytoplasm. It catalyses the reaction N(2)-acetyl-L-ornithine + L-glutamate = N-acetyl-L-glutamate + L-ornithine. The enzyme catalyses L-glutamate + acetyl-CoA = N-acetyl-L-glutamate + CoA + H(+). It participates in amino-acid biosynthesis; L-arginine biosynthesis; L-ornithine and N-acetyl-L-glutamate from L-glutamate and N(2)-acetyl-L-ornithine (cyclic): step 1/1. Its pathway is amino-acid biosynthesis; L-arginine biosynthesis; N(2)-acetyl-L-ornithine from L-glutamate: step 1/4. Its function is as follows. Catalyzes two activities which are involved in the cyclic version of arginine biosynthesis: the synthesis of N-acetylglutamate from glutamate and acetyl-CoA as the acetyl donor, and of ornithine by transacetylation between N(2)-acetylornithine and glutamate. This chain is Arginine biosynthesis bifunctional protein ArgJ, found in Syntrophotalea carbinolica (strain DSM 2380 / NBRC 103641 / GraBd1) (Pelobacter carbinolicus).